A 234-amino-acid chain; its full sequence is Fibrillarin-like rRNA/tRNA 2'-O-methyltransferase (234 aa).

Residues 90–91 (TT), 109–110 (EF), 134–135 (DA), and 154–157 (DIAQ) each bind S-adenosyl-L-methionine.

Belongs to the methyltransferase superfamily. Fibrillarin family. As to quaternary structure, interacts with nop5. Component of box C/D small ribonucleoprotein (sRNP) particles that contain rpl7ae, FlpA and nop5, plus a guide RNA.

Involved in pre-rRNA and tRNA processing. Utilizes the methyl donor S-adenosyl-L-methionine to catalyze the site-specific 2'-hydroxyl methylation of ribose moieties in rRNA and tRNA. Site specificity is provided by a guide RNA that base pairs with the substrate. Methylation occurs at a characteristic distance from the sequence involved in base pairing with the guide RNA. The chain is Fibrillarin-like rRNA/tRNA 2'-O-methyltransferase from Staphylothermus marinus (strain ATCC 43588 / DSM 3639 / JCM 9404 / F1).